The primary structure comprises 161 residues: Putative pre-16S rRNA nuclease (161 aa).

Belongs to the YqgF nuclease family.

The protein resides in the cytoplasm. In terms of biological role, could be a nuclease involved in processing of the 5'-end of pre-16S rRNA. The polypeptide is Putative pre-16S rRNA nuclease (Bradyrhizobium sp. (strain ORS 278)).